A 642-amino-acid chain; its full sequence is Threonine--tRNA ligase (642 aa).

A TGS domain is found at Met1–Thr61. Residues Asp243 to Pro534 are catalytic. Residues Cys334, His385, and His511 each coordinate Zn(2+).

The protein belongs to the class-II aminoacyl-tRNA synthetase family. Homodimer. Zn(2+) serves as cofactor.

It localises to the cytoplasm. The enzyme catalyses tRNA(Thr) + L-threonine + ATP = L-threonyl-tRNA(Thr) + AMP + diphosphate + H(+). Functionally, catalyzes the attachment of threonine to tRNA(Thr) in a two-step reaction: L-threonine is first activated by ATP to form Thr-AMP and then transferred to the acceptor end of tRNA(Thr). Also edits incorrectly charged L-seryl-tRNA(Thr). The polypeptide is Threonine--tRNA ligase (Yersinia enterocolitica serotype O:8 / biotype 1B (strain NCTC 13174 / 8081)).